Here is a 63-residue protein sequence, read N- to C-terminus: Large ribosomal subunit protein bL35 (63 aa).

The segment at 24 to 44 (RAKAYRSHRATGKTTKQKRQL) is disordered.

The protein belongs to the bacterial ribosomal protein bL35 family.

In Mycoplasma mycoides subsp. mycoides SC (strain CCUG 32753 / NCTC 10114 / PG1), this protein is Large ribosomal subunit protein bL35.